The chain runs to 575 residues: Protein NRT1/ PTR FAMILY 5.6 (575 aa).

The next 2 membrane-spanning stretches (helical) occupy residues Ala-44–Thr-64 and Trp-88–Gly-108. Position 112 is a phosphothreonine (Thr-112). 10 helical membrane-spanning segments follow: residues Val-113 to Ile-133, Val-153 to Leu-173, Phe-195 to Ala-215, Trp-223 to Ile-243, Leu-339 to Gln-359, Ile-375 to Ile-395, Ile-420 to Leu-440, Val-457 to Gly-477, Leu-493 to Ile-513, and Phe-541 to Lys-561.

Belongs to the major facilitator superfamily. Proton-dependent oligopeptide transporter (POT/PTR) (TC 2.A.17) family. Expressed in stems, shoots, leaves, flowers and siliques.

The protein resides in the membrane. The chain is Protein NRT1/ PTR FAMILY 5.6 (NPF5.6) from Arabidopsis thaliana (Mouse-ear cress).